A 424-amino-acid polypeptide reads, in one-letter code: Serine--tRNA ligase (424 aa).

230-232 (TAE) lines the L-serine pocket. Residue 261–263 (RSE) participates in ATP binding. Glu284 contributes to the L-serine binding site. 348–351 (EISS) contributes to the ATP binding site. An L-serine-binding site is contributed by Ser384.

This sequence belongs to the class-II aminoacyl-tRNA synthetase family. Type-1 seryl-tRNA synthetase subfamily. As to quaternary structure, homodimer. The tRNA molecule binds across the dimer.

The protein localises to the cytoplasm. It carries out the reaction tRNA(Ser) + L-serine + ATP = L-seryl-tRNA(Ser) + AMP + diphosphate + H(+). The enzyme catalyses tRNA(Sec) + L-serine + ATP = L-seryl-tRNA(Sec) + AMP + diphosphate + H(+). It functions in the pathway aminoacyl-tRNA biosynthesis; selenocysteinyl-tRNA(Sec) biosynthesis; L-seryl-tRNA(Sec) from L-serine and tRNA(Sec): step 1/1. Functionally, catalyzes the attachment of serine to tRNA(Ser). Is also able to aminoacylate tRNA(Sec) with serine, to form the misacylated tRNA L-seryl-tRNA(Sec), which will be further converted into selenocysteinyl-tRNA(Sec). The chain is Serine--tRNA ligase from Streptococcus pneumoniae serotype 19F (strain G54).